The chain runs to 476 residues: Protein transport protein Sec61 subunit alpha isoform 1 (476 aa).

At 1–33 the chain is on the cytoplasmic side; that stretch reads MAIKFLEVIKPFCVILPEIQKPERKIQFKEKVL. Residues 34-53 traverse the membrane as a helical segment; sequence WTAITLFIFLVCCQIPLFGI. Topologically, residues 54–76 are lumenal; that stretch reads MSSDSADPFYWMRVILASNRGTL. Residues 77–96 traverse the membrane as a helical segment; that stretch reads MELGISPIVTSGLIMQLLAG. The Cytoplasmic portion of the chain corresponds to 97–117; the sequence is AKIIEVGDTPKDRALFNGAQK. Residues 118 to 138 traverse the membrane as a helical segment; it reads LFGMIITIGQSIVYVMTGMYG. At 139 to 144 the chain is on the lumenal side; that stretch reads DPSEMG. The chain crosses the membrane as a helical span at residues 145–165; sequence AGICLLITIQLFVAGLIVLLL. At 166–172 the chain is on the cytoplasmic side; the sequence is DELLQKG. A helical transmembrane segment spans residues 173–193; sequence YGLGSGISLFIATNICETIVW. The Lumenal segment spans residues 194–240; the sequence is KAFSPTTVNTGRGMEFEGAIIALFHLLATRTDKVRALREAFYRQNLP. A helical transmembrane segment spans residues 241–261; the sequence is NLMNLIATIFVFAVVIYFQGF. The Cytoplasmic segment spans residues 262 to 288; the sequence is RVDLPIKSARYRGQYNTYPIKLFYTSN. A helical transmembrane segment spans residues 289-309; that stretch reads IPIILQSALVSNLYVISQMLS. The Lumenal segment spans residues 310-354; it reads ARFSGNLLVSLLGTWSDTSSGGPARAYPVGGLCYYLSPPESFGSV. Residues 355 to 375 traverse the membrane as a helical segment; it reads LEDPVHAVVYIVFMLGSCAFF. Over 376–420 the chain is Cytoplasmic; it reads SKTWIEVSGSSAKDVAKQLKEQQMVMRGHRETSMVHELNRYIPTA. A helical membrane pass occupies residues 421–441; sequence AAFGGLCIGALSVLADFLGAI. Topologically, residues 442–445 are lumenal; sequence GSGT. Residues 446 to 462 form a helical membrane-spanning segment; it reads GILLAVTIIYQYFEIFV. The Cytoplasmic portion of the chain corresponds to 463-476; it reads KEQSEVGSMGALLF.

It belongs to the SecY/SEC61-alpha family. The SEC61 channel-forming translocon complex consists of channel-forming core components SEC61A1, SEC61B and SEC61G and different auxiliary components such as SEC62 and SEC63. The SEC61 channel associates with the multi-pass translocon (MPT) complex. In terms of tissue distribution, expressed in proximal and distal tubules in kidney (at protein level).

It localises to the endoplasmic reticulum membrane. In terms of biological role, component of SEC61 channel-forming translocon complex that mediates transport of signal peptide-containing precursor polypeptides across the endoplasmic reticulum (ER). Forms a ribosome receptor and a gated pore in the ER membrane, both functions required for cotranslational translocation of nascent polypeptides. May cooperate with auxiliary protein SEC62, SEC63 and HSPA5/BiP to enable post-translational transport of small presecretory proteins. The SEC61 channel is also involved in ER membrane insertion of transmembrane proteins: it mediates membrane insertion of the first few transmembrane segments of proteins, while insertion of subsequent transmembrane regions of multi-pass membrane proteins is mediated by the multi-pass translocon (MPT) complex. The SEC61 channel cooperates with the translocating protein TRAM1 to import nascent proteins into the ER. Controls the passive efflux of calcium ions from the ER lumen to the cytosol through SEC61 channel, contributing to the maintenance of cellular calcium homeostasis. Plays a critical role in nephrogenesis, specifically at pronephros stage. This chain is Protein transport protein Sec61 subunit alpha isoform 1 (SEC61A1), found in Homo sapiens (Human).